The following is a 102-amino-acid chain: DET1- and DDB1-associated protein 1 (102 aa).

At alanine 2 the chain carries N-acetylalanine. Phosphoserine is present on residues serine 33 and serine 95. The interval 67-102 (NAAKKRDQEQVEAEGESSAPPRKVARTDSPDMPEDT) is disordered.

This sequence belongs to the DDA1 family. In terms of assembly, component of numerous DCX (DDB1-CUL4-X-box) E3 ubiquitin-protein ligase complexes which consist of a core of DDB1, cullin-4 (CUL4A or CUL4B), DDA1 and RBX1. Component of the DCX(DCAF15) complex, also named CLR4(DCAF15) complex, composed of DCAF15, DDB1, cullin-4 (CUL4A or CUL4B), DDA1 and RBX1. Part of the DDD core complex containing DET1, DDA1 and DDB1; the DDD core complex recruits a specific UBE2E enzyme, such as UBE2E1, UBE2E2 UBE2E3, to form specific DDD-E2 complexes.

It functions in the pathway protein modification; protein ubiquitination. Functionally, functions as a component of numerous distinct DCX (DDB1-CUL4-X-box) E3 ubiquitin-protein ligase complexes which mediate the ubiquitination and subsequent proteasomal degradation of target proteins. In the DCX complexes, acts as a scaffolding subunit required to stabilize the complex. The sequence is that of DET1- and DDB1-associated protein 1 from Mus musculus (Mouse).